Reading from the N-terminus, the 269-residue chain is Eukaryotic translation initiation factor 3 subunit G-1 (269 aa).

The RRM domain maps to 188 to 266 (AAIRISNLSE…LILSVEWSKP (79 aa)).

The protein belongs to the eIF-3 subunit G family. In terms of assembly, component of the eukaryotic translation initiation factor 3 (eIF-3) complex. The eIF-3 complex interacts with pix.

The protein resides in the cytoplasm. RNA-binding component of the eukaryotic translation initiation factor 3 (eIF-3) complex, which is involved in protein synthesis of a specialized repertoire of mRNAs and, together with other initiation factors, stimulates binding of mRNA and methionyl-tRNAi to the 40S ribosome. The eIF-3 complex specifically targets and initiates translation of a subset of mRNAs involved in cell proliferation. This subunit can bind 18S rRNA. This chain is Eukaryotic translation initiation factor 3 subunit G-1, found in Drosophila grimshawi (Hawaiian fruit fly).